Consider the following 693-residue polypeptide: Heat shock protein homolog SSE2 (693 aa).

The tract at residues 653–693 (LRANQETSKMNDIAEKLAEQRRARAASDDSDDNNDENMDLD) is disordered. A compositionally biased stretch (basic and acidic residues) spans 664 to 679 (DIAEKLAEQRRARAAS). The span at 680–693 (DDSDDNNDENMDLD) shows a compositional bias: acidic residues.

It belongs to the heat shock protein 70 family.

Its function is as follows. Has a calcium-dependent calmodulin-binding activity. The polypeptide is Heat shock protein homolog SSE2 (SSE2) (Saccharomyces cerevisiae (strain ATCC 204508 / S288c) (Baker's yeast)).